The primary structure comprises 90 residues: Small ribosomal subunit protein bS18 (90 aa).

It belongs to the bacterial ribosomal protein bS18 family. In terms of assembly, part of the 30S ribosomal subunit. Forms a tight heterodimer with protein bS6.

In terms of biological role, binds as a heterodimer with protein bS6 to the central domain of the 16S rRNA, where it helps stabilize the platform of the 30S subunit. This chain is Small ribosomal subunit protein bS18, found in Bacteroides fragilis (strain YCH46).